The sequence spans 625 residues: tRNA uridine 5-carboxymethylaminomethyl modification enzyme MnmG (625 aa).

FAD is bound by residues glycine 16 to glycine 21, isoleucine 128, and serine 183. Glycine 275–phenylalanine 289 contacts NAD(+). Position 372 (glutamine 372) interacts with FAD.

It belongs to the MnmG family. Homodimer. Heterotetramer of two MnmE and two MnmG subunits. FAD is required as a cofactor.

Its subcellular location is the cytoplasm. In terms of biological role, NAD-binding protein involved in the addition of a carboxymethylaminomethyl (cmnm) group at the wobble position (U34) of certain tRNAs, forming tRNA-cmnm(5)s(2)U34. In Protochlamydia amoebophila (strain UWE25), this protein is tRNA uridine 5-carboxymethylaminomethyl modification enzyme MnmG.